A 392-amino-acid polypeptide reads, in one-letter code: Formate-dependent phosphoribosylglycinamide formyltransferase (392 aa).

N(1)-(5-phospho-beta-D-ribosyl)glycinamide-binding positions include E22–L23 and E82. Residues R114, K155, S160–Q165, E195–V198, and E203 contribute to the ATP site. In terms of domain architecture, ATP-grasp spans R119–L308. Mg(2+)-binding residues include E267 and E279. N(1)-(5-phospho-beta-D-ribosyl)glycinamide-binding positions include D286, K355, and R362–R363.

It belongs to the PurK/PurT family. As to quaternary structure, homodimer.

The enzyme catalyses N(1)-(5-phospho-beta-D-ribosyl)glycinamide + formate + ATP = N(2)-formyl-N(1)-(5-phospho-beta-D-ribosyl)glycinamide + ADP + phosphate + H(+). The protein operates within purine metabolism; IMP biosynthesis via de novo pathway; N(2)-formyl-N(1)-(5-phospho-D-ribosyl)glycinamide from N(1)-(5-phospho-D-ribosyl)glycinamide (formate route): step 1/1. Its function is as follows. Involved in the de novo purine biosynthesis. Catalyzes the transfer of formate to 5-phospho-ribosyl-glycinamide (GAR), producing 5-phospho-ribosyl-N-formylglycinamide (FGAR). Formate is provided by PurU via hydrolysis of 10-formyl-tetrahydrofolate. The protein is Formate-dependent phosphoribosylglycinamide formyltransferase of Shigella boydii serotype 4 (strain Sb227).